A 445-amino-acid polypeptide reads, in one-letter code: Argininosuccinate synthase (445 aa).

Residues 17-25 (AFSGGLDTS) and A43 contribute to the ATP site. Y99 contacts L-citrulline. ATP is bound by residues G129 and T131. 3 residues coordinate L-aspartate: T131, N135, and D136. N135 lines the L-citrulline pocket. D136 contacts ATP. Residues R139 and S192 each contribute to the L-citrulline site. D194 serves as a coordination point for ATP. L-citrulline contacts are provided by T201, E203, and E280.

It belongs to the argininosuccinate synthase family. Type 2 subfamily. As to quaternary structure, homotetramer.

The protein localises to the cytoplasm. The catalysed reaction is L-citrulline + L-aspartate + ATP = 2-(N(omega)-L-arginino)succinate + AMP + diphosphate + H(+). Its pathway is amino-acid biosynthesis; L-arginine biosynthesis; L-arginine from L-ornithine and carbamoyl phosphate: step 2/3. In Bradyrhizobium sp. (strain BTAi1 / ATCC BAA-1182), this protein is Argininosuccinate synthase.